The primary structure comprises 161 residues: Phosphopantetheine adenylyltransferase (161 aa).

Serine 10 is a substrate binding site. Residues 10–11 (SF) and histidine 18 contribute to the ATP site. The substrate site is built by lysine 42, alanine 75, and arginine 89. Residues 90–92 (GLR), glutamate 100, and 125–131 (LSPISSS) contribute to the ATP site.

It belongs to the bacterial CoaD family. In terms of assembly, homohexamer. Mg(2+) is required as a cofactor.

Its subcellular location is the cytoplasm. It catalyses the reaction (R)-4'-phosphopantetheine + ATP + H(+) = 3'-dephospho-CoA + diphosphate. Its pathway is cofactor biosynthesis; coenzyme A biosynthesis; CoA from (R)-pantothenate: step 4/5. In terms of biological role, reversibly transfers an adenylyl group from ATP to 4'-phosphopantetheine, yielding dephospho-CoA (dPCoA) and pyrophosphate. The chain is Phosphopantetheine adenylyltransferase from Streptococcus agalactiae serotype III (strain NEM316).